We begin with the raw amino-acid sequence, 174 residues long: Regenerating islet-derived protein 3-alpha (174 aa).

The first 25 residues, 1-25 (MLPRLSFNNVSWTLLYYLFIFQVRG), serve as a signal peptide directing secretion. The propeptide occupies 26-36 (EDSQKAVPSTR). Cystine bridges form between Cys-39–Cys-50, Cys-67–Cys-170, and Cys-145–Cys-162. Residues 46–171 (YRSYCYTLVT…CDVELPFVCK (126 aa)) form the C-type lectin domain. The segment at 102-117 (WIWLHDPTMGQQPNGG) is sufficient to activate EXTL3. Positions 106 and 120 each coordinate Zn(2+).

In terms of assembly, forms a hexameric membrane-permeabilizing oligomeric pore on membrane phospholipids. The hexamer is formed by three dimers related by helical symmetry. Forms filaments, filamentation traps pore complexes and limits damage to host cells. Interacts with EXTL3. Proteolytic processing by trypsin removes an inhibitory N-terminal propeptide and is essential for peptidoglycan binding and antibacterial activity. As to expression, low expression found in healthy pancreas.

It is found in the secreted. Bactericidal C-type lectin. The lack of the EPN motif may explain its inability to bind peptidoglycan. Its function is as follows. Acts as a hormone in response to different stimuli like anti-inflammatory signals, such as IL17A, or gut microbiome. Secreted by different cell types to activate its receptor EXTL3 and induce cell specific signaling pathways. Induced by IL17A in keratinocytes, regulates keratinocyte proliferation and differentiation after skin injury via activation of EXTL3-PI3K-AKT signaling pathway. In parallel, inhibits skin inflammation through the inhibition of inflammatory cytokines such as IL6 and TNF. In pancreas, is able to permealize beta-cells membrane and stimulate their proliferation. This Rattus norvegicus (Rat) protein is Regenerating islet-derived protein 3-alpha (Reg3a).